The following is a 336-amino-acid chain: Inositol 2-dehydrogenase (336 aa).

The protein belongs to the Gfo/Idh/MocA family. In terms of assembly, homotetramer.

The enzyme catalyses myo-inositol + NAD(+) = scyllo-inosose + NADH + H(+). Its function is as follows. Involved in the oxidation of myo-inositol (MI) to 2-keto-myo-inositol (2KMI or 2-inosose). This chain is Inositol 2-dehydrogenase, found in Salmonella agona (strain SL483).